The primary structure comprises 419 residues: Putative polyketide beta-ketoacyl synthase 2 (419 aa).

The Ketosynthase family 3 (KS3) domain occupies T10–P413.

It belongs to the thiolase-like superfamily. Beta-ketoacyl-ACP synthases family.

The protein operates within antibiotic biosynthesis; curamycin biosynthesis. In Streptomyces cyaneus (Streptomyces curacoi), this protein is Putative polyketide beta-ketoacyl synthase 2 (curB).